Here is a 418-residue protein sequence, read N- to C-terminus: Histidine--tRNA ligase (418 aa).

Belongs to the class-II aminoacyl-tRNA synthetase family.

Its subcellular location is the cytoplasm. The enzyme catalyses tRNA(His) + L-histidine + ATP = L-histidyl-tRNA(His) + AMP + diphosphate + H(+). The chain is Histidine--tRNA ligase from Methanococcus maripaludis (strain C6 / ATCC BAA-1332).